The chain runs to 264 residues: Energy-coupling factor transporter ATP-binding protein EcfA1 (264 aa).

Residues 2 to 234 (IQVENLSFSY…DEFNPFLIKI (233 aa)) enclose the ABC transporter domain. 34–41 (GKNGSGKS) lines the ATP pocket.

Belongs to the ABC transporter superfamily. Energy-coupling factor EcfA family. In terms of assembly, forms a stable energy-coupling factor (ECF) transporter complex composed of 2 membrane-embedded substrate-binding proteins (S component), 2 ATP-binding proteins (A component) and 2 transmembrane proteins (T component).

It localises to the cell inner membrane. Its function is as follows. ATP-binding (A) component of a common energy-coupling factor (ECF) ABC-transporter complex. Unlike classic ABC transporters this ECF transporter provides the energy necessary to transport a number of different substrates. The polypeptide is Energy-coupling factor transporter ATP-binding protein EcfA1 (Fusobacterium nucleatum subsp. nucleatum (strain ATCC 25586 / DSM 15643 / BCRC 10681 / CIP 101130 / JCM 8532 / KCTC 2640 / LMG 13131 / VPI 4355)).